A 223-amino-acid polypeptide reads, in one-letter code: MTIAKMIDHTALKPDTTKEQILTLTKEAREYGFASVCVNPTWVKLSAEQLAGAESVVCTVIGFPLGANTPEVKAFEVKDAIQNGAKEVDMVINIGALKDKDNELVERDIRAVVDAAKGKALVKVIIETCLLTDEEKVRACEIAVKAGTDFVKTSTGFSTGGATAEDIALMRKTVGQNIGVKASGGVRTKEDVEKMIEAGATRIGASAGVAIVSGEKPAKPDNY.

Asp-89 serves as the catalytic Proton donor/acceptor. The active-site Schiff-base intermediate with acetaldehyde is Lys-152. The active-site Proton donor/acceptor is the Lys-181.

This sequence belongs to the DeoC/FbaB aldolase family. DeoC type 1 subfamily.

It is found in the cytoplasm. The enzyme catalyses 2-deoxy-D-ribose 5-phosphate = D-glyceraldehyde 3-phosphate + acetaldehyde. It functions in the pathway carbohydrate degradation; 2-deoxy-D-ribose 1-phosphate degradation; D-glyceraldehyde 3-phosphate and acetaldehyde from 2-deoxy-alpha-D-ribose 1-phosphate: step 2/2. Its function is as follows. Catalyzes a reversible aldol reaction between acetaldehyde and D-glyceraldehyde 3-phosphate to generate 2-deoxy-D-ribose 5-phosphate. The protein is Deoxyribose-phosphate aldolase of Listeria welshimeri serovar 6b (strain ATCC 35897 / DSM 20650 / CCUG 15529 / CIP 8149 / NCTC 11857 / SLCC 5334 / V8).